The following is a 144-amino-acid chain: Putative pre-16S rRNA nuclease (144 aa).

The protein belongs to the YqgF nuclease family.

The protein localises to the cytoplasm. Its function is as follows. Could be a nuclease involved in processing of the 5'-end of pre-16S rRNA. In Acaryochloris marina (strain MBIC 11017), this protein is Putative pre-16S rRNA nuclease.